We begin with the raw amino-acid sequence, 743 residues long: MEHTYQYSWIIPLVPLPVPMLIGVGLLFFPTATKNLRRMWAFISILLLSIVMIFSIDLSIEQIDRTSIYQSLRTWTITSDLSFEFGYFIDPLTSIMSILITTVGILVLIYSDNYMSHDQGYLRFFAYMSFFNASMLGLVTSSNFIQIYIFWELVGMCSYLLIGFWFTRPIAAGACQKAFVTNRVGDFGLLLGILGLYWLTGSFEFRDLFEILKNLIYNNEVNLLFVTLCAFLLFAGPVAKSAQFPLHVWLPDAMEGPTPISALIHAATMVAAGIFLVARLLPLFIVIPYAMNLISLIGIITVFLGATLALAQQDIKRGLAYSTMSQLGYMMLALGMGSYRAALFHLITHAYSKALLFLGSGSIIHSMEAIVGYFPDKSQNMVLMGGLRKHVPITKTAFLVGTLSLCGIPPLACFWSKDEILNDTWLYSPIFATIAFFTAGLTAFYMFRIYLLTFEGPFNFCLQNYSGKKRNSLYSISLWGKEEPKPIKNKFHLVALLTMNNNKRASFFAKKTHRIASTVTNMPFITIFPFGAAKTFCYPHESDNTILFVMLVLVLFPLFVGAIGIPLNQEVIESDILSKLLTPSINLLQQNSTHFVDWYEVVKNPTLSVSITYFGILLAYFLYKPFYSSLHNWNILNFFAKRGPKRILWDKILNFLYDWSYNRAYIDAFYTRSLTEGIRGLAELTHLFDRRVIDGITNGVGITSFFVGEGIKYLGGSRISFYLLLYLFSLLFFLIFLFFFFFK.

Transmembrane regions (helical) follow at residues 9–29 (WIIP…LLFF), 40–60 (WAFI…DLSI), 89–109 (IDPL…LVLI), 125–145 (FAYM…SNFI), 147–167 (IYIF…FWFT), 185–205 (GDFG…SFEF), 219–239 (NEVN…GPVA), 258–278 (TPIS…FLVA), 280–300 (LLPL…IGII), 327–347 (LGYM…FHLI), 354–374 (ALLF…VGYF), 396–416 (TAFL…CFWS), 425–445 (WLYS…TAFY), 546–566 (ILFV…IGIP), 607–627 (LSVS…KPFY), and 721–741 (FYLL…FFFF).

The protein belongs to the complex I subunit 5 family. As to quaternary structure, NDH is composed of at least 16 different subunits, 5 of which are encoded in the nucleus.

It is found in the plastid. The protein localises to the chloroplast thylakoid membrane. It catalyses the reaction a plastoquinone + NADH + (n+1) H(+)(in) = a plastoquinol + NAD(+) + n H(+)(out). It carries out the reaction a plastoquinone + NADPH + (n+1) H(+)(in) = a plastoquinol + NADP(+) + n H(+)(out). In terms of biological role, NDH shuttles electrons from NAD(P)H:plastoquinone, via FMN and iron-sulfur (Fe-S) centers, to quinones in the photosynthetic chain and possibly in a chloroplast respiratory chain. The immediate electron acceptor for the enzyme in this species is believed to be plastoquinone. Couples the redox reaction to proton translocation, and thus conserves the redox energy in a proton gradient. The polypeptide is NAD(P)H-quinone oxidoreductase subunit 5, chloroplastic (ndhF) (Citrus sinensis (Sweet orange)).